The following is a 156-amino-acid chain: Xanthocillin biosynthesis cluster protein D (156 aa).

N-linked (GlcNAc...) asparagine glycosylation is found at asparagine 107 and asparagine 120. The helical transmembrane segment at isoleucine 131–leucine 153 threads the bilayer.

Its subcellular location is the membrane. The protein operates within secondary metabolite biosynthesis. Part of the gene cluster that mediates the biosynthesis of the isocyanide xanthocillin and its derivatives. The first step of the pathway consists in the conversion of tyrosine into a vinyl-isonitrile intermediate by the isocyanide synthase xanB. Subsequent oxidative dimerization of this intermediate to form xanthocillin may involve the cytochrome P450 monooxygenase xanG, whose expression is coregulated with that of XanB. Xanthocillin can be further modified by the isonitrile hydratase-like protein xanA which introduces N-formyl groups and the methyltransferase xanE which introduces methyl groups, leading to the production of several derivatives including fumiformamide. Finally, fumiformamide can be subject to both oxidative and reductive cyclization to yield melanocins E and F, respectively. In Aspergillus fumigatus (strain ATCC MYA-4609 / CBS 101355 / FGSC A1100 / Af293) (Neosartorya fumigata), this protein is Xanthocillin biosynthesis cluster protein D.